Consider the following 311-residue polypeptide: Tyrosine recombinase XerD (311 aa).

Residues 3 to 88 (DMSAAYVEAF…ALRQFYKFLY (86 aa)) enclose the Core-binding (CB) domain. The region spanning 109 to 298 (TLPKTLSIED…LEERLHDLVQ (190 aa)) is the Tyr recombinase domain. Residues arginine 156, lysine 180, histidine 250, arginine 253, and histidine 276 contribute to the active site. The O-(3'-phospho-DNA)-tyrosine intermediate role is filled by tyrosine 285.

This sequence belongs to the 'phage' integrase family. XerD subfamily. In terms of assembly, forms a cyclic heterotetrameric complex composed of two molecules of XerC and two molecules of XerD.

It is found in the cytoplasm. In terms of biological role, site-specific tyrosine recombinase, which acts by catalyzing the cutting and rejoining of the recombining DNA molecules. The XerC-XerD complex is essential to convert dimers of the bacterial chromosome into monomers to permit their segregation at cell division. It also contributes to the segregational stability of plasmids. The polypeptide is Tyrosine recombinase XerD (Rhizobium meliloti (strain 1021) (Ensifer meliloti)).